The following is a 363-amino-acid chain: UDP-N-acetylglucosamine--N-acetylmuramyl-(pentapeptide) pyrophosphoryl-undecaprenol N-acetylglucosamine transferase (363 aa).

UDP-N-acetyl-alpha-D-glucosamine contacts are provided by residues 14–16 (TGG), R171, S200, and Q290.

It belongs to the glycosyltransferase 28 family. MurG subfamily.

Its subcellular location is the cell inner membrane. The enzyme catalyses di-trans,octa-cis-undecaprenyl diphospho-N-acetyl-alpha-D-muramoyl-L-alanyl-D-glutamyl-meso-2,6-diaminopimeloyl-D-alanyl-D-alanine + UDP-N-acetyl-alpha-D-glucosamine = di-trans,octa-cis-undecaprenyl diphospho-[N-acetyl-alpha-D-glucosaminyl-(1-&gt;4)]-N-acetyl-alpha-D-muramoyl-L-alanyl-D-glutamyl-meso-2,6-diaminopimeloyl-D-alanyl-D-alanine + UDP + H(+). It participates in cell wall biogenesis; peptidoglycan biosynthesis. In terms of biological role, cell wall formation. Catalyzes the transfer of a GlcNAc subunit on undecaprenyl-pyrophosphoryl-MurNAc-pentapeptide (lipid intermediate I) to form undecaprenyl-pyrophosphoryl-MurNAc-(pentapeptide)GlcNAc (lipid intermediate II). In Borreliella afzelii (strain PKo) (Borrelia afzelii), this protein is UDP-N-acetylglucosamine--N-acetylmuramyl-(pentapeptide) pyrophosphoryl-undecaprenol N-acetylglucosamine transferase.